Reading from the N-terminus, the 992-residue chain is ATP-dependent 6-phosphofructokinase subunit alpha (992 aa).

The interval M1 to V558 is N-terminal catalytic PFK domain 1. Residues G193, R256 to S257, and G286 to S289 contribute to the ATP site. D287 contacts Mg(2+). Beta-D-fructose 6-phosphate contacts are provided by residues S332–D334, R369, M376–R378, E433, K460, and H466–R469. The Proton acceptor role is filled by D334. The segment at N559–L572 is interdomain linker. Residues N573–V992 form a C-terminal regulatory PFK domain 2 region. Residues R643, T700–N704, R738, Q745–G747, E805, R831, H837–Q840, and R929 each bind beta-D-fructose 2,6-bisphosphate.

It belongs to the phosphofructokinase type A (PFKA) family. ATP-dependent PFK group I subfamily. Eukaryotic two domain clade 'E' sub-subfamily. Heterooctamer of 4 alpha and 4 beta chains. Mg(2+) is required as a cofactor.

It is found in the cytoplasm. It catalyses the reaction beta-D-fructose 6-phosphate + ATP = beta-D-fructose 1,6-bisphosphate + ADP + H(+). It participates in carbohydrate degradation; glycolysis; D-glyceraldehyde 3-phosphate and glycerone phosphate from D-glucose: step 3/4. Its activity is regulated as follows. Allosterically activated by ADP, AMP, or fructose 2,6-bisphosphate, and allosterically inhibited by ATP or citrate. Functionally, catalyzes the phosphorylation of D-fructose 6-phosphate to fructose 1,6-bisphosphate by ATP, the first committing step of glycolysis. The chain is ATP-dependent 6-phosphofructokinase subunit alpha (PFK1) from Kluyveromyces lactis (strain ATCC 8585 / CBS 2359 / DSM 70799 / NBRC 1267 / NRRL Y-1140 / WM37) (Yeast).